The sequence spans 335 residues: Holliday junction branch migration complex subunit RuvB (335 aa).

Residues 4 to 184 (VDRIVSANAK…FGIVQRLEFY (181 aa)) form a large ATPase domain (RuvB-L) region. ATP contacts are provided by residues Ile23, Arg24, Gly65, Lys68, Thr69, Thr70, 131–133 (EDY), Arg174, Tyr184, and Arg221. Thr69 contacts Mg(2+). Positions 185–255 (SVEDLASIVT…IAQEALKMLD (71 aa)) are small ATPAse domain (RuvB-S). The head domain (RuvB-H) stretch occupies residues 258–335 (LAGFDFMDRK…RHFGLEQIEK (78 aa)). DNA contacts are provided by Arg294, Arg313, and Arg318.

It belongs to the RuvB family. Homohexamer. Forms an RuvA(8)-RuvB(12)-Holliday junction (HJ) complex. HJ DNA is sandwiched between 2 RuvA tetramers; dsDNA enters through RuvA and exits via RuvB. An RuvB hexamer assembles on each DNA strand where it exits the tetramer. Each RuvB hexamer is contacted by two RuvA subunits (via domain III) on 2 adjacent RuvB subunits; this complex drives branch migration. In the full resolvosome a probable DNA-RuvA(4)-RuvB(12)-RuvC(2) complex forms which resolves the HJ.

It localises to the cytoplasm. It carries out the reaction ATP + H2O = ADP + phosphate + H(+). Functionally, the RuvA-RuvB-RuvC complex processes Holliday junction (HJ) DNA during genetic recombination and DNA repair, while the RuvA-RuvB complex plays an important role in the rescue of blocked DNA replication forks via replication fork reversal (RFR). RuvA specifically binds to HJ cruciform DNA, conferring on it an open structure. The RuvB hexamer acts as an ATP-dependent pump, pulling dsDNA into and through the RuvAB complex. RuvB forms 2 homohexamers on either side of HJ DNA bound by 1 or 2 RuvA tetramers; 4 subunits per hexamer contact DNA at a time. Coordinated motions by a converter formed by DNA-disengaged RuvB subunits stimulates ATP hydrolysis and nucleotide exchange. Immobilization of the converter enables RuvB to convert the ATP-contained energy into a lever motion, pulling 2 nucleotides of DNA out of the RuvA tetramer per ATP hydrolyzed, thus driving DNA branch migration. The RuvB motors rotate together with the DNA substrate, which together with the progressing nucleotide cycle form the mechanistic basis for DNA recombination by continuous HJ branch migration. Branch migration allows RuvC to scan DNA until it finds its consensus sequence, where it cleaves and resolves cruciform DNA. In Histophilus somni (strain 129Pt) (Haemophilus somnus), this protein is Holliday junction branch migration complex subunit RuvB.